The primary structure comprises 479 residues: Ammonium transporter Rh type C (479 aa).

Residues 1–9 are Cytoplasmic-facing; sequence MAWNTNLRW. The helical transmembrane segment at 10-30 threads the bilayer; that stretch reads RLPLTCLLLQVAMVILFGVFV. Residues 31–60 lie on the Extracellular side of the membrane; that stretch reads RYDFDADAHWWTERKHKNLSEVENEFYYRY. The N-linked (GlcNAc...) asparagine glycan is linked to asparagine 48. A helical transmembrane segment spans residues 61–81; sequence PSFQDVHVMVFVGFGFLMTFL. The Cytoplasmic portion of the chain corresponds to 82-85; the sequence is QRYG. Residues 86–106 traverse the membrane as a helical segment; the sequence is FSAVGFNFLLAAFGIQWALLM. Residues 107 to 123 are Extracellular-facing; the sequence is QGWFHFLEGRYIVVGVE. A helical transmembrane segment spans residues 124–144; that stretch reads NLINADFCVASVCVAFGAVLG. Topologically, residues 145 to 148 are cytoplasmic; sequence KVSP. A helical transmembrane segment spans residues 149 to 169; the sequence is IQLLIMTFFQVTLFAVNEFIL. Topologically, residues 170–177 are extracellular; the sequence is LNLLKVKD. The helical transmembrane segment at 178–200 threads the bilayer; that stretch reads AGGSMTIHTFYAYFELTVTRILY. Topologically, residues 201–218 are cytoplasmic; that stretch reads RRNLEQSKERQSSAYQSD. A helical transmembrane segment spans residues 219–239; it reads LFAMIGTLFLWMYWPSFNSAI. Residues 240 to 250 lie on the Extracellular side of the membrane; that stretch reads SYHGDSQHRAA. The helical transmembrane segment at 251 to 271 threads the bilayer; that stretch reads INTYCSLAACVLTSVAVSSAL. The Cytoplasmic portion of the chain corresponds to 272 to 281; the sequence is HKKGKLDMVH. The chain crosses the membrane as a helical span at residues 282–302; sequence IQNATLAGGVAVGTTAEMMLM. Position 303 (proline 303) is a topological domain, extracellular. A helical transmembrane segment spans residues 304–324; the sequence is YGALIIGFICGIISTLGFVYL. Residues 325-345 lie on the Cytoplasmic side of the membrane; the sequence is TPFLESRLHIQDTCGINNLHG. Residues 346 to 366 traverse the membrane as a helical segment; that stretch reads IPGIIGGIVGAVTAASASLEV. Residues 367–394 are Extracellular-facing; that stretch reads YGKEGLVHSFDFQDFKRDWTARTQGKFQ. Residues 395–415 form a helical membrane-spanning segment; it reads IYGLLVTLAMALMGGIIVGLI. At 416-479 the chain is on the cytoplasmic side; the sequence is LRLPFWGQPS…PMASSVPLVP (64 aa).

Belongs to the ammonium transporter (TC 2.A.49) family. Rh subfamily. As to quaternary structure, homotrimer. N-glycosylated.

The protein resides in the apical cell membrane. The enzyme catalyses NH4(+)(in) = NH4(+)(out). It catalyses the reaction methylamine(out) = methylamine(in). It carries out the reaction CO2(out) = CO2(in). In terms of biological role, ammonium transporter involved in the maintenance of acid-base homeostasis. Transports ammonium and its related derivative methylammonium across the plasma membrane of epithelial cells likely contributing to renal transepithelial ammonia transport and ammonia metabolism. Postulated to primarily mediate an electroneutral bidirectional transport of NH3 ammonia species according to a mechanism that implies interaction of an NH4(+) ion with acidic residues of the pore entry followed by dissociation of NH4(+) into NH3 and H(+). As a result NH3 transits through the central pore and is protonated on the extracellular side reforming NH4(+). May act as a CO2 channel providing for renal acid secretion. The chain is Ammonium transporter Rh type C (RHCG) from Macaca mulatta (Rhesus macaque).